The chain runs to 383 residues: Chaperone protein DnaJ (383 aa).

Positions Asp5–Gly70 constitute a J domain. The segment at Gly142 to Thr220 adopts a CR-type zinc-finger fold. Cys155, Cys158, Cys172, Cys175, Cys194, Cys197, Cys208, and Cys211 together coordinate Zn(2+). 4 CXXCXGXG motif repeats span residues Cys155–Gly162, Cys172–Gly179, Cys194–Gly201, and Cys208–Gly215.

This sequence belongs to the DnaJ family. In terms of assembly, homodimer. Requires Zn(2+) as cofactor.

It localises to the cytoplasm. Participates actively in the response to hyperosmotic and heat shock by preventing the aggregation of stress-denatured proteins and by disaggregating proteins, also in an autonomous, DnaK-independent fashion. Unfolded proteins bind initially to DnaJ; upon interaction with the DnaJ-bound protein, DnaK hydrolyzes its bound ATP, resulting in the formation of a stable complex. GrpE releases ADP from DnaK; ATP binding to DnaK triggers the release of the substrate protein, thus completing the reaction cycle. Several rounds of ATP-dependent interactions between DnaJ, DnaK and GrpE are required for fully efficient folding. Also involved, together with DnaK and GrpE, in the DNA replication of plasmids through activation of initiation proteins. The protein is Chaperone protein DnaJ of Dinoroseobacter shibae (strain DSM 16493 / NCIMB 14021 / DFL 12).